Consider the following 366-residue polypeptide: tRNA-queuosine alpha-mannosyltransferase (366 aa).

It belongs to the glycosyltransferase group 1 family. Glycosyltransferase 4 subfamily.

It localises to the cytoplasm. It is found in the nucleus. It carries out the reaction queuosine(34) in tRNA(Asp) + GDP-alpha-D-mannose = O-4''-alpha-D-mannosylqueuosine(34) in tRNA(Asp) + GDP + H(+). Glycosyltransferase that specifically catalyzes mannosylation of cytoplasmic tRNA(Asp) modified with queuosine at position 34 (queuosine(34)). Mannosylates the cyclopentene moiety of queuosine(34) in tRNA(Asp) to form mannosyl-queuosine(34). Mannosylation of queuosine(34) in tRNA(Asp) is required to slow-down elongation at cognate codons, GAC and GAU, thereby regulating protein translation. In Bos taurus (Bovine), this protein is tRNA-queuosine alpha-mannosyltransferase (GTDC1).